Consider the following 96-residue polypeptide: Putative pterin-4-alpha-carbinolamine dehydratase (96 aa).

It belongs to the pterin-4-alpha-carbinolamine dehydratase family.

It carries out the reaction (4aS,6R)-4a-hydroxy-L-erythro-5,6,7,8-tetrahydrobiopterin = (6R)-L-erythro-6,7-dihydrobiopterin + H2O. The chain is Putative pterin-4-alpha-carbinolamine dehydratase from Prochlorococcus marinus (strain MIT 9215).